The following is a 321-amino-acid chain: Calcium-binding protein LPS1-alpha (321 aa).

EF-hand domains are found at residues aspartate 15–glutamate 49, tryptophan 47–glutamate 82, tyrosine 85–lysine 120, valine 121–isoleucine 156, glutamate 165–tyrosine 200, tyrosine 200–serine 233, valine 232–glutamine 267, and valine 269–tyrosine 304. 39 residues coordinate Ca(2+): aspartate 29, asparagine 31, aspartate 33, threonine 35, glutamate 40, aspartate 60, asparagine 62, aspartate 64, histidine 66, glutamate 71, aspartate 98, aspartate 100, asparagine 102, arginine 104, glutamate 109, aspartate 134, aspartate 136, aspartate 138, histidine 140, glutamate 145, aspartate 178, asparagine 180, aspartate 182, serine 184, glutamate 189, aspartate 213, asparagine 215, aspartate 217, arginine 219, glutamate 224, aspartate 245, aspartate 247, asparagine 249, lysine 251, glutamate 256, aspartate 284, aspartate 286, tyrosine 288, and glutamate 293.

As to expression, aboral ectoderm, a squamous epithelium covering the surface of the late stage embryo and larva.

Functionally, calcium-binding protein involved in larval development and metamorphosis. Likely to function as calcium buffers mediating the transport of calcium from the sea water to the blastocoel where calcium is required for skeleton formation. The chain is Calcium-binding protein LPS1-alpha from Lytechinus pictus (Painted sea urchin).